The chain runs to 337 residues: MVVKVGINGFGRIGRIVFRNAIEHNDVEIVAVNDPFIEPHYAAYMLKYDSTHGQFKGDIKVDGNNLTVNGKTVRFHMEKDPANIPWSETGAYYVVESTGVFTTTEKAKAHLKGGAKKVVISAPSADAPMFVMGVNHETYKSDIEVLSNSSCTTNCLAPLAKVIHDKYTIIEGLMTTIHSYTATQKVVDGPSAKDWRGGRTAAQNIIPSSTGAAKAVGKVIPELNGKLTGMAMRVPTANVSVVDLTVRIEKGASYDEIKQAVKEASEGPLSGILGYTEDDIVTTDLNGDNRSSIFDAKAGISLNKNFVKLVSWYDNEWGYSRRVLDLLVYIAKIDGNA.

NAD(+) is bound by residues 12–13 (RI), D34, and K79. Residues 150 to 152 (SCT), T181, 210 to 211 (TG), and R233 each bind D-glyceraldehyde 3-phosphate. C151 acts as the Nucleophile in catalysis. N315 serves as a coordination point for NAD(+).

It belongs to the glyceraldehyde-3-phosphate dehydrogenase family. In terms of assembly, homotetramer.

Its subcellular location is the cytoplasm. It carries out the reaction D-glyceraldehyde 3-phosphate + phosphate + NAD(+) = (2R)-3-phospho-glyceroyl phosphate + NADH + H(+). It functions in the pathway carbohydrate degradation; glycolysis; pyruvate from D-glyceraldehyde 3-phosphate: step 1/5. The sequence is that of Glyceraldehyde-3-phosphate dehydrogenase (GPD) from Cochliobolus lunatus (Filamentous fungus).